A 312-amino-acid polypeptide reads, in one-letter code: Glyoxylate/hydroxypyruvate reductase A (312 aa).

R227 is a catalytic residue. Catalysis depends on H275, which acts as the Proton donor.

The protein belongs to the D-isomer specific 2-hydroxyacid dehydrogenase family. GhrA subfamily.

Its subcellular location is the cytoplasm. The catalysed reaction is glycolate + NADP(+) = glyoxylate + NADPH + H(+). It catalyses the reaction (R)-glycerate + NAD(+) = 3-hydroxypyruvate + NADH + H(+). The enzyme catalyses (R)-glycerate + NADP(+) = 3-hydroxypyruvate + NADPH + H(+). Its function is as follows. Catalyzes the NADPH-dependent reduction of glyoxylate and hydroxypyruvate into glycolate and glycerate, respectively. The chain is Glyoxylate/hydroxypyruvate reductase A from Escherichia coli O157:H7.